We begin with the raw amino-acid sequence, 556 residues long: MSESTNNPNEKTYKINLVKGTKKWNIAKFSNKIDLSSFSKPVRMYKFNPIANMINNESNNFGQPTTSTYTNNHYSYKNIQPTMTSAPNGTNSTGTTPNTTTTTTTTTTTTTTTTTAAGTPGAPNPAAATQPFVRKKRYEAKPVNPKTIPWKLEDSEGNNTYQGNVEGNQASSNYFLFMFQSDGSIKAVPCNDWYNFRPKKEFQSLTTEEAEDFMKKKNQEWDVFTSRLQKKTDPSGSGSGGSESSGKKSIEELEEAEHRNRNEDPNRYKTTNEEKKKKKAPARRREREDEGNGEDGDAPDFESKFDDDDDDTYMDGDGLTGEDENQIEEDEEEEDVDLTEGGLEMKKMIKKQQQQNDSEDDLADDDDKKDNNGGTGGGDDEDDDEDDEDPDQDDLSNLPKVFGKSNADGTTNSSVKKEDDGGKDSKSSKKSKKKDKDSSPKSKEKKSKKNKSDSSVDNRESKKIKKEPSSPQAVQPNSPSQQQQQQQQNIDPNDPPFTEEYIKIVLQKSKKVKSLDLINIFKGPLKNPDNKPIFLAMVHNVARVVEENGVKYLIPK.

Disordered stretches follow at residues 82–128 (TMTS…PAAA) and 226–499 (SRLQ…PFTE). A compositionally biased stretch (low complexity) spans 84–128 (TSAPNGTNSTGTTPNTTTTTTTTTTTTTTTTTAAGTPGAPNPAAA). The span at 245 to 275 (SGKKSIEELEEAEHRNRNEDPNRYKTTNEEK) shows a compositional bias: basic and acidic residues. Acidic residues-rich tracts occupy residues 291–338 (GNGE…DVDL) and 378–394 (GDDE…DQDD). Composition is skewed to basic and acidic residues over residues 415 to 427 (VKKE…DSKS) and 450 to 461 (NKSDSSVDNRES). Low complexity predominate over residues 469-492 (SSPQAVQPNSPSQQQQQQQQNIDP).

The protein belongs to the TFIIF alpha subunit family. In terms of assembly, heterodimer of an alpha and a beta subunit.

The protein resides in the nucleus. TFIIF is a general transcription initiation factor that binds to RNA polymerase II and helps to recruit it to the initiation complex in collaboration with TFIIB. It promotes transcription elongation. The chain is General transcription factor IIF subunit 1 (gtf2f1) from Dictyostelium discoideum (Social amoeba).